Consider the following 111-residue polypeptide: WAP four-disulfide core domain protein 12 (111 aa).

The first 23 residues, 1 to 23, serve as a signal peptide directing secretion; sequence MGSSSFLVLTVSLALVTLVAAEG. The region spanning 27–74 is the WAP domain; that stretch reads GIEKAGVCPADNVRCFKSDPPQCHTDQDCLGARKCCYLHCGFKCVIPV. 4 disulfide bridges follow: cysteine 34-cysteine 62, cysteine 41-cysteine 66, cysteine 49-cysteine 61, and cysteine 55-cysteine 70. The tract at residues 80 to 111 is disordered; the sequence is GGNKDEDVSGPCPEPGWEAKSPGSSSTGCPQK. The span at 101-111 shows a compositional bias: polar residues; the sequence is PGSSSTGCPQK.

The protein resides in the secreted. In terms of biological role, antibacterial protein. Putative acid-stable proteinase inhibitor. The chain is WAP four-disulfide core domain protein 12 (WFDC12) from Papio anubis (Olive baboon).